We begin with the raw amino-acid sequence, 213 residues long: Adenylate kinase (213 aa).

Residue 10 to 15 (GSGKGT) participates in ATP binding. Residues 30–59 (SVGDLLRNIISSESKLGKGIKDTVESGNLI) form an NMP region. AMP contacts are provided by residues Arg36, 57–59 (NLI), 83–86 (GFPR), and Gln90. The interval 125 to 160 (DRLTCLDCKSIYSISSFKNTTCAKCKSTRLEKRIDD) is LID. Arg126 lines the ATP pocket. Zn(2+)-binding residues include Cys129 and Cys132. 135–136 (IY) lines the ATP pocket. Cys146 and Cys149 together coordinate Zn(2+). Arg157 and Arg169 together coordinate AMP. Leu195 serves as a coordination point for ATP.

Belongs to the adenylate kinase family. In terms of assembly, monomer.

The protein localises to the cytoplasm. It carries out the reaction AMP + ATP = 2 ADP. Its pathway is purine metabolism; AMP biosynthesis via salvage pathway; AMP from ADP: step 1/1. Its function is as follows. Catalyzes the reversible transfer of the terminal phosphate group between ATP and AMP. Plays an important role in cellular energy homeostasis and in adenine nucleotide metabolism. The chain is Adenylate kinase from Wolbachia pipientis subsp. Culex pipiens (strain wPip).